A 382-amino-acid polypeptide reads, in one-letter code: Chorismate synthase (382 aa).

2 residues coordinate NADP(+): Arg-39 and Arg-45. FMN-binding positions include 127-129 (RAS), 245-246 (QA), Gly-290, 305-309 (KPIPT), and Arg-331.

Belongs to the chorismate synthase family. As to quaternary structure, homotetramer. The cofactor is FMNH2.

The catalysed reaction is 5-O-(1-carboxyvinyl)-3-phosphoshikimate = chorismate + phosphate. It participates in metabolic intermediate biosynthesis; chorismate biosynthesis; chorismate from D-erythrose 4-phosphate and phosphoenolpyruvate: step 7/7. In terms of biological role, catalyzes the anti-1,4-elimination of the C-3 phosphate and the C-6 proR hydrogen from 5-enolpyruvylshikimate-3-phosphate (EPSP) to yield chorismate, which is the branch point compound that serves as the starting substrate for the three terminal pathways of aromatic amino acid biosynthesis. This reaction introduces a second double bond into the aromatic ring system. This is Chorismate synthase from Desulfitobacterium hafniense (strain DSM 10664 / DCB-2).